A 259-amino-acid polypeptide reads, in one-letter code: MIEQFFRPDSVEQALELKRRYQDEAVWFAGGSKLNATPTRTDKKIAISLQDLELDWVDWDNGALRIGAMSRLQPLRDARFIPAALREALGFVYSRHVRNQSTIGGEIAARQEESVLLPVLLALDAELVFGNGETLSIEDYLACPCDRLLTEIIIKDPYRTCATRKISRSQAGLTVVTAAVAMTDHDGMRIALDGVASKALRLHDVEKQNLEGNALEQAVANAIFPQEDLRGSVAYKRYITGVLVADLYADCQQAGEEAV.

The 159-residue stretch at 1 to 159 (MIEQFFRPDS…TEIIIKDPYR (159 aa)) folds into the FAD-binding PCMH-type domain.

This is an uncharacterized protein from Escherichia coli O157:H7.